Consider the following 266-residue polypeptide: Amylovoran biosynthesis glycosyltransferase AmsE (266 aa).

This sequence belongs to the glycosyltransferase 2 family.

It participates in glycan metabolism; exopolysaccharide biosynthesis. Its function is as follows. Involved in the biosynthesis of amylovoran which functions as a virulence factor. The protein is Amylovoran biosynthesis glycosyltransferase AmsE (amsE) of Erwinia amylovora (Fire blight bacteria).